We begin with the raw amino-acid sequence, 366 residues long: Growth hormone secretagogue receptor type 1 (366 aa).

The Extracellular portion of the chain corresponds to 1–40 (MWNATPSEEPGSNLTRAELGWDAPPGNDSLADELLQLFPA). N-linked (GlcNAc...) asparagine glycosylation is found at N13 and N27. A helical membrane pass occupies residues 41-66 (PLLAGVTATCVALFVVGIAGNLLTML). Residues 67 to 72 (VVSRFR) lie on the Cytoplasmic side of the membrane. Residues 73 to 96 (ELRTTTNLYLSSMAFSDLLIFLCM) traverse the membrane as a helical segment. The Extracellular portion of the chain corresponds to 97 to 117 (PLDLVRLWQYRPWNFGDLLCK). An intrachain disulfide couples C116 to C198. The chain crosses the membrane as a helical span at residues 118–139 (LFQFVSESCTYATVLTITALSV). The Cytoplasmic segment spans residues 140-162 (ERYFAICFPLRAKVVVTKGRVKL). Residues 163–183 (VILVIWALAFCSAGPIFVLVG) form a helical membrane-spanning segment. Residues 184 to 211 (VEHENGTDPQDTNECRATEFAVRSGLLT) are Extracellular-facing. N188 is a glycosylation site (N-linked (GlcNAc...) asparagine). Residues 212-235 (IMVWVSSVFFFLPVFCLTVLYSLI) form a helical membrane-spanning segment. Topologically, residues 236-263 (GRKLWRRKRGDGAVGSSLRDQNHRQTVK) are cytoplasmic. The chain crosses the membrane as a helical span at residues 264–285 (MLAVVVFAFILCWLPFHVGRYL). The Extracellular portion of the chain corresponds to 286–302 (FSKSFEPGSLEIAQISQ). A helical membrane pass occupies residues 303–326 (YCNLVSFVLFYLSAAINPILYNIM). Over 327–366 (SKKYRVAVFKLLGFEPFSQRKLSTLKDESSRAWTKSSINT) the chain is Cytoplasmic.

Belongs to the G-protein coupled receptor 1 family.

Its subcellular location is the cell membrane. Functionally, receptor for ghrelin, coupled to G-alpha-11 proteins. Stimulates growth hormone secretion. Also binds other growth hormone releasing peptides (GHRP) (e.g. Met-enkephalin and GHRP-6) as well as non-peptide, low molecular weight secretagogues (e.g. L-692,429, MK-0677, adenosine). The chain is Growth hormone secretagogue receptor type 1 (GHSR) from Oryctolagus cuniculus (Rabbit).